The sequence spans 566 residues: Arginine--tRNA ligase (566 aa).

Positions 120-130 match the 'HIGH' region motif; the sequence is PNIAKPFHVGH.

The protein belongs to the class-I aminoacyl-tRNA synthetase family. In terms of assembly, monomer.

It is found in the cytoplasm. It catalyses the reaction tRNA(Arg) + L-arginine + ATP = L-arginyl-tRNA(Arg) + AMP + diphosphate. This is Arginine--tRNA ligase from Clostridium kluyveri (strain NBRC 12016).